Consider the following 424-residue polypeptide: D-inositol 3-phosphate glycosyltransferase (424 aa).

1D-myo-inositol 3-phosphate-binding positions include His9, 20-25 (DAGGMN), Lys78, Tyr110, Thr134, and Arg154. Gly23 serves as a coordination point for UDP-N-acetyl-alpha-D-glucosamine. UDP-N-acetyl-alpha-D-glucosamine-binding residues include Arg231, Lys236, and Arg295. The Mg(2+) site is built by Tyr304, Gln305, and Ala307. UDP-N-acetyl-alpha-D-glucosamine is bound by residues Glu317 and Glu325. A Mg(2+)-binding site is contributed by Thr331.

It belongs to the glycosyltransferase group 1 family. MshA subfamily. Homodimer.

It catalyses the reaction 1D-myo-inositol 3-phosphate + UDP-N-acetyl-alpha-D-glucosamine = 1D-myo-inositol 2-acetamido-2-deoxy-alpha-D-glucopyranoside 3-phosphate + UDP + H(+). Functionally, catalyzes the transfer of a N-acetyl-glucosamine moiety to 1D-myo-inositol 3-phosphate to produce 1D-myo-inositol 2-acetamido-2-deoxy-glucopyranoside 3-phosphate in the mycothiol biosynthesis pathway. The sequence is that of D-inositol 3-phosphate glycosyltransferase from Corynebacterium urealyticum (strain ATCC 43042 / DSM 7109).